Here is a 154-residue protein sequence, read N- to C-terminus: MIHVAFVCLGNICRSPMAEAIMRQRLQERGISDIKVHSRGTGRWNLGEPPHNGTQKILQKYHIPYDGMVSELFEPDDDFDYIIAMDQSNVDNIKQINPNLQGQLFKLLEFSNMEESDVPDPYYTNNFEGVFEMVQSSCDNLIDYIVKDANLKER.

The Nucleophile role is filled by C8. Residue R14 is part of the active site. The Proton donor role is filled by D120.

The protein belongs to the low molecular weight phosphotyrosine protein phosphatase family.

The catalysed reaction is O-phospho-L-tyrosyl-[protein] + H2O = L-tyrosyl-[protein] + phosphate. Dephosphorylates the phosphotyrosine-containing proteins. The chain is Low molecular weight protein-tyrosine-phosphatase PtpA (ptpA) from Staphylococcus epidermidis (strain ATCC 35984 / DSM 28319 / BCRC 17069 / CCUG 31568 / BM 3577 / RP62A).